Here is a 527-residue protein sequence, read N- to C-terminus: Peptide chain release factor 3 (527 aa).

Residues Ala9–Leu277 form the tr-type G domain. GTP is bound by residues Ser18–Thr25, Asp86–His90, and Asn140–Asp143.

Belongs to the TRAFAC class translation factor GTPase superfamily. Classic translation factor GTPase family. PrfC subfamily.

Its subcellular location is the cytoplasm. Functionally, increases the formation of ribosomal termination complexes and stimulates activities of RF-1 and RF-2. It binds guanine nucleotides and has strong preference for UGA stop codons. It may interact directly with the ribosome. The stimulation of RF-1 and RF-2 is significantly reduced by GTP and GDP, but not by GMP. The polypeptide is Peptide chain release factor 3 (Pseudomonas fluorescens (strain ATCC BAA-477 / NRRL B-23932 / Pf-5)).